The following is a 916-amino-acid chain: Protein translocase subunit SecA (916 aa).

Residues Gln87, 105–109 (GEGKT), and Asp512 each bind ATP. The segment at 857-916 (QHAEAPSMEQAVAGEDEELPEGPAPVVPLEPVRNEQKIGRNEPCPCGSGKKYKHCHGQLD) is disordered. Zn(2+) contacts are provided by Cys900, Cys902, Cys911, and His912. Basic residues predominate over residues 906–916 (KKYKHCHGQLD).

Belongs to the SecA family. In terms of assembly, monomer and homodimer. Part of the essential Sec protein translocation apparatus which comprises SecA, SecYEG and auxiliary proteins SecDF-YajC and YidC. Zn(2+) is required as a cofactor.

It localises to the cell inner membrane. Its subcellular location is the cytoplasm. It catalyses the reaction ATP + H2O + cellular proteinSide 1 = ADP + phosphate + cellular proteinSide 2.. Its function is as follows. Part of the Sec protein translocase complex. Interacts with the SecYEG preprotein conducting channel. Has a central role in coupling the hydrolysis of ATP to the transfer of proteins into and across the cell membrane, serving both as a receptor for the preprotein-SecB complex and as an ATP-driven molecular motor driving the stepwise translocation of polypeptide chains across the membrane. The polypeptide is Protein translocase subunit SecA (Pseudomonas paraeruginosa (strain DSM 24068 / PA7) (Pseudomonas aeruginosa (strain PA7))).